Consider the following 91-residue polypeptide: Acylphosphatase (91 aa).

An Acylphosphatase-like domain is found at 6-91; the sequence is CMRCYISGRV…WEDYISFDVL (86 aa). Residues Arg-21 and Asn-39 contribute to the active site.

The protein belongs to the acylphosphatase family.

It catalyses the reaction an acyl phosphate + H2O = a carboxylate + phosphate + H(+). This chain is Acylphosphatase (acyP), found in Legionella pneumophila subsp. pneumophila (strain Philadelphia 1 / ATCC 33152 / DSM 7513).